The following is a 96-amino-acid chain: UPF0235 protein VCM66_0443 (96 aa).

Belongs to the UPF0235 family.

The sequence is that of UPF0235 protein VCM66_0443 from Vibrio cholerae serotype O1 (strain M66-2).